Reading from the N-terminus, the 664-residue chain is DCC-interacting protein 13-beta (664 aa).

The tract at residues 1 to 428 is required for RAB5A binding; it reads MPAVDKLLLE…NSEMENENDK (428 aa). The BAR domain maps to 3–268; sequence AVDKLLLEEA…ESVYTPDSDV (266 aa). A PH domain is found at 277 to 375; that stretch reads LIQKAGYLNL…WICAINNISR (99 aa). The region spanning 488 to 637 is the PID domain; sequence SLLQQMFIVR…LMLSIPLTND (150 aa). A disordered region spans residues 643–664; the sequence is LNDQPDDDDGNPNEHRGAESEA. Residues 654-664 show a composition bias toward basic and acidic residues; it reads PNEHRGAESEA.

In terms of assembly, homodimer. Homotetramer. Binds RAB5A/Rab5 through an N-terminal domain. This interaction is essential for its recruitment to endosomal membranes as well as its role in cell proliferation. Binds subunits of the NuRD/MeCP1 complex. Interacts with FSHR; interaction is independent of follicle stimulating hormone stimulation. Interacts with APPL1; the interaction is decreased by adiponectin in a time-dependent manner. Forms a complex comprising APPL1, RUVBL2, CTNNB1, HDAC1 and HDAC2; interaction reduces interaction between CTNNB1, HDAC1, HDAC2 and RUVBL2 leading to the decrease of deacetylase activity of this complex; affects the recruitment of repressive complexes to the Wnt target genes. Interacts (via BAR domain) with TBC1D1; interaction is dependent of TBC1D1 phosphorylation at 'Ser-235'; interaction diminishes the phosphorylation of TBC1D1 at 'Thr-596', resulting in inhibition of SLC2A4 translocation and glucose uptake. Interacts with ANXA2; targets APPL2 to endosomes and acting in parallel to RAB5A. Interacts with RAB31 (in GTP-bound form); interaction contributes to or enhances recruitment of APPL2 to the phagosomes; interaction enhances Fc-gamma receptor-mediated phagocytosis through PI3K/Akt signaling in macrophages. Interacts with PIK3R1; forms a complex with PIK3R1 and APPL1. Interacts (via BAR domain) with ADIPOR1; hinders the accessibility of APPL1 to ADIPOR1; negatively regulates adiponectin signaling; ADIPOQ dissociates this interaction and facilitates the recruitment of APPL1 to ADIPOR1. Interacts (via BAR domain) with ADIPOR2; ADIPOQ dissociates this interaction. As to expression, high levels in brain, heart, kidney and skeletal muscle.

The protein resides in the early endosome membrane. Its subcellular location is the nucleus. It is found in the cell membrane. It localises to the endosome membrane. The protein localises to the cytoplasm. The protein resides in the cytoplasmic vesicle. Its subcellular location is the phagosome. It is found in the cell projection. It localises to the ruffle. The protein localises to the ruffle membrane. The protein resides in the phagosome membrane. Functionally, multifunctional adapter protein that binds to various membrane receptors, nuclear factors and signaling proteins to regulate many processes, such as cell proliferation, immune response, endosomal trafficking and cell metabolism. Regulates signaling pathway leading to cell proliferation through interaction with RAB5A and subunits of the NuRD/MeCP1 complex. Plays a role in immune response by modulating phagocytosis, inflammatory and innate immune responses. In macrophages, enhances Fc-gamma receptor-mediated phagocytosis through interaction with RAB31 leading to activation of PI3K/Akt signaling. In response to LPS, modulates inflammatory responses by playing a key role on the regulation of TLR4 signaling and in the nuclear translocation of RELA/NF-kappa-B p65 and the secretion of pro- and anti-inflammatory cytokines. Also functions as a negative regulator of innate immune response via inhibition of AKT1 signaling pathway by forming a complex with APPL1 and PIK3R1. Plays a role in endosomal trafficking of TGFBR1 from the endosomes to the nucleus. Plays a role in cell metabolism by regulating adiponecting ans insulin signaling pathways and adaptative thermogenesis. In muscle, negatively regulates adiponectin-simulated glucose uptake and fatty acid oxidation by inhibiting adiponectin signaling pathway through APPL1 sequestration thereby antagonizing APPL1 action. In muscles, negatively regulates insulin-induced plasma membrane recruitment of GLUT4 and glucose uptake through interaction with TBC1D1. Plays a role in cold and diet-induced adaptive thermogenesis by activating ventromedial hypothalamus (VMH) neurons throught AMPK inhibition which enhances sympathetic outflow to subcutaneous white adipose tissue (sWAT), sWAT beiging and cold tolerance. Also plays a role in other signaling pathways namely Wnt/beta-catenin, HGF and glucocorticoid receptor signaling. Positive regulator of beta-catenin/TCF-dependent transcription through direct interaction with RUVBL2/reptin resulting in the relief of RUVBL2-mediated repression of beta-catenin/TCF target genes by modulating the interactions within the beta-catenin-reptin-HDAC complex. May affect adult neurogenesis in hippocampus and olfactory system via regulating the sensitivity of glucocorticoid receptor. Required for fibroblast migration through HGF cell signaling. This is DCC-interacting protein 13-beta from Homo sapiens (Human).